A 140-amino-acid polypeptide reads, in one-letter code: Sex-regulated protein janus-B (140 aa).

R42 is a binding site for substrate. H69 (proton acceptor) is an active-site residue. 110-112 (SRT) is a substrate binding site.

It belongs to the janus family.

Its function is as follows. JanA and janB regulate somatic sex differentiation. This Drosophila erecta (Fruit fly) protein is Sex-regulated protein janus-B (janB).